Consider the following 199-residue polypeptide: Superoxide dismutase [Mn] 2 (199 aa).

Mn(2+)-binding residues include His-28, His-75, Asp-157, and His-161.

This sequence belongs to the iron/manganese superoxide dismutase family. The cofactor is Mn(2+).

It carries out the reaction 2 superoxide + 2 H(+) = H2O2 + O2. In terms of biological role, destroys superoxide anion radicals which are normally produced within the cells and which are toxic to biological systems. In Haloferax volcanii (strain ATCC 29605 / DSM 3757 / JCM 8879 / NBRC 14742 / NCIMB 2012 / VKM B-1768 / DS2) (Halobacterium volcanii), this protein is Superoxide dismutase [Mn] 2 (sod2).